A 142-amino-acid polypeptide reads, in one-letter code: Hemoglobin subunit alpha-1 (142 aa).

In terms of domain architecture, Globin spans 2 to 142 (VLSADDKSNV…VSTVLTSKYR (141 aa)). O2 is bound at residue H59. Heme b is bound at residue H88.

It belongs to the globin family. In terms of assembly, heterotetramer of two alpha chains and two beta chains. In terms of tissue distribution, red blood cells.

Its function is as follows. Involved in oxygen transport from the lung to the various peripheral tissues. In terms of biological role, hemopressin acts as an antagonist peptide of the cannabinoid receptor CNR1. Hemopressin-binding efficiently blocks cannabinoid receptor CNR1 and subsequent signaling. The sequence is that of Hemoglobin subunit alpha-1 (HBA1) from Equus quagga burchellii (Burchell's zebra).